We begin with the raw amino-acid sequence, 275 residues long: Bis(5'-nucleosyl)-tetraphosphatase, symmetrical (275 aa).

Belongs to the Ap4A hydrolase family.

It catalyses the reaction P(1),P(4)-bis(5'-adenosyl) tetraphosphate + H2O = 2 ADP + 2 H(+). Functionally, hydrolyzes diadenosine 5',5'''-P1,P4-tetraphosphate to yield ADP. The protein is Bis(5'-nucleosyl)-tetraphosphatase, symmetrical of Photorhabdus laumondii subsp. laumondii (strain DSM 15139 / CIP 105565 / TT01) (Photorhabdus luminescens subsp. laumondii).